Reading from the N-terminus, the 64-residue chain is Conotoxin Pu3.5 (64 aa).

The signal sequence occupies residues 1-16 (LGVLLTICLLLFPLTA). Positions 17–49 (VPLDGDQPADQPAGRMQDDISSEQHPFFDPVKR) are excised as a propeptide. Disulfide bonds link Cys-50–Cys-63, Cys-51–Cys-58, and Cys-54–Cys-62.

The protein belongs to the conotoxin M superfamily. Expressed by the venom duct.

It is found in the secreted. In Conus pulicarius (Flea-bitten cone), this protein is Conotoxin Pu3.5.